The chain runs to 253 residues: Nurim homolog (253 aa).

Over 1-2 (MA) the chain is Nuclear. The chain crosses the membrane as a helical span at residues 3–30 (TFAKVMLLLSSVATFGYTFFVVGKLMLF). Residues 31–56 (LSTPRSISKAHTWIFNLLDNKSRLET) are Perinuclear space-facing. The chain crosses the membrane as a helical span at residues 57-78 (AYGPIVFDTLYLIGFIFQHSFL). Residues 79-96 (KSALVKNLWRKLGLAAAE) lie on the Nuclear side of the membrane. A helical membrane pass occupies residues 97 to 113 (RTIYSLTSSICLHYLLK). The Perinuclear space portion of the chain corresponds to 114–132 (NWLPAQSIVLWQVDVDESA). A helical membrane pass occupies residues 133 to 161 (PLWWTFVVTHGLGWAVIFGGSLIMDLPEL). The Nuclear segment spans residues 162-188 (LGVKQVYYDLKEYGEPVAYKSSELRNL). A helical transmembrane segment spans residues 189–207 (YSHVRHPSFVGLSVILFAT). The Perinuclear space segment spans residues 208-213 (NVMSLD). Residues 214–231 (RLLLASLLTVYMYVAWST) form a helical membrane-spanning segment. Residues 232–253 (DDKDVAYQKQQLRNKKHELKAQ) are Nuclear-facing.

The protein belongs to the nurim family.

The protein localises to the nucleus inner membrane. The protein is Nurim homolog (nrm) of Drosophila pseudoobscura pseudoobscura (Fruit fly).